A 76-amino-acid chain; its full sequence is Defensin-like protein 163 (76 aa).

The first 27 residues, 1 to 27 (MAKLIYSYLFISMFVLSVLLALPNAEG), serve as a signal peptide directing secretion. Cystine bridges form between Cys-33/Cys-76, Cys-43/Cys-62, Cys-48/Cys-70, and Cys-52/Cys-72.

This sequence belongs to the DEFL family.

It localises to the secreted. The protein is Defensin-like protein 163 (LCR24) of Arabidopsis thaliana (Mouse-ear cress).